Reading from the N-terminus, the 599-residue chain is Elongation factor 4 (599 aa).

The region spanning 5-187 is the tr-type G domain; sequence SHIRNFSIIA…RLVAVIPPPT (183 aa). Residues 17–22 and 134–137 each bind GTP; these read DHGKST and NKMD.

The protein belongs to the TRAFAC class translation factor GTPase superfamily. Classic translation factor GTPase family. LepA subfamily.

It localises to the cell inner membrane. It carries out the reaction GTP + H2O = GDP + phosphate + H(+). Required for accurate and efficient protein synthesis under certain stress conditions. May act as a fidelity factor of the translation reaction, by catalyzing a one-codon backward translocation of tRNAs on improperly translocated ribosomes. Back-translocation proceeds from a post-translocation (POST) complex to a pre-translocation (PRE) complex, thus giving elongation factor G a second chance to translocate the tRNAs correctly. Binds to ribosomes in a GTP-dependent manner. The sequence is that of Elongation factor 4 from Stutzerimonas stutzeri (strain A1501) (Pseudomonas stutzeri).